The sequence spans 579 residues: Effector protein HopAB3 (579 aa).

Disordered stretches follow at residues 1–140 (MAGI…TGAV), 214–294 (VRQQ…NQVP), and 384–408 (PARA…PDSA). The tract at residues 1 to 336 (MAGINGAGPS…LRAALERHIL (336 aa)) is host recognition; Pto interaction. Composition is skewed to low complexity over residues 23–39 (ASGG…SSNS), 89–101 (RPQE…APQA), 219–248 (ASAP…ESSS), 266–281 (NQRR…ASQR), and 384–402 (PARA…ATVS). The tract at residues 337–579 (HRRPIPMDIA…IAKYAFRIVP (243 aa)) is E3 ubiquitin-protein ligase.

This sequence belongs to the HopAB family. Interacts physically with plant cell Pto. Auto-ubiquitinated.

The protein resides in the secreted. Functionally, effector protein involved in gene-for-gene resistance in tomato plants. It is recognized by the host Pto resistance protein and elicits Pto and Prf-dependent hypersensitive response (HR) and programmed cell death (PCD), resulting in host immunity. In susceptible plants, acts as a virulence factor by suppressing PCD and HR-based plant immunity. This function requires its E3 ubiquitin ligase activity probably by recruiting E2 enzymes and transferring ubiquitin molecules to cellular proteins involved in regulation of PCD and targeting them for degradation. Enhances the development of disease symptoms and bacterial growth. This Pseudomonas syringae pv. tomato protein is Effector protein HopAB3 (hopAB3).